A 429-amino-acid chain; its full sequence is MTTVSYVTILLTVLVQVLTSDAKATNNKRELSSGLKERSLSDDAPQFWKGRFSRSEEDPQFWKGRFSDPQFWKGRFSDPQFWKGRFSDPQFWKGRFSDPQFWKGRFSDPQFWKGRFSDPQFWKGRFSDGTKRENDPQYWKGRFSRSFEDQPDSEAQFWKGRFARTSTGEKREPQYWKGRFSRDSVPGRYGRELQGRFGRELQGRFGREAQGRFGRELQGRFGREFQGRFGREDQGRFGREDQGRFGREDQGRFGREDQGRFGREDQGRFGREDQGRFGRELQGRFGREDQGRFGREDQGRFGREDQGRFGRELQGRFGREDQGRFGREDQGRFGREDLAKEDQGRFGREDLAKEDQGRFGREDIAKEDQGRFGRNAAAAAKKRTIDVIDIESDPKPQTRFRDGKDMQEKRKVEKKDKIEKSDDALAKIS.

Residues 1–22 form the signal peptide; the sequence is MTTVSYVTILLTVLVQVLTSDA. The propeptide occupies 23-233; sequence KATNNKRELS…EFQGRFGRED (211 aa). Residues 230–371 are compositionally biased toward basic and acidic residues; sequence GREDQGRFGR…EDIAKEDQGR (142 aa). A disordered region spans residues 230 to 429; sequence GREDQGRFGR…KSDDALAKIS (200 aa). A Pyrrolidone carboxylic acid modification is found at glutamine 234. Phenylalanine 237 carries the post-translational modification Phenylalanine amide. The propeptide occupies 239–241; the sequence is RED. Pyrrolidone carboxylic acid is present on glutamine 242. Phenylalanine 245 carries the phenylalanine amide modification. The propeptide occupies 247 to 249; the sequence is RED. Glutamine 250 is modified (pyrrolidone carboxylic acid). Phenylalanine amide is present on phenylalanine 253. A propeptide spanning residues 255-257 is cleaved from the precursor; sequence RED. Glutamine 258 bears the Pyrrolidone carboxylic acid mark. Phenylalanine 261 bears the Phenylalanine amide mark. The propeptide occupies 263-265; the sequence is RED. Glutamine 266 carries the pyrrolidone carboxylic acid modification. Phenylalanine 269 is subject to Phenylalanine amide. The propeptide occupies 271-273; sequence RED. Glutamine 274 is subject to Pyrrolidone carboxylic acid. At phenylalanine 277 the chain carries Phenylalanine amide. Residues 279 to 289 constitute a propeptide that is removed on maturation; it reads RELQGRFGRED. The residue at position 290 (glutamine 290) is a Pyrrolidone carboxylic acid. Phenylalanine 293 carries the post-translational modification Phenylalanine amide. Positions 295-297 are excised as a propeptide; it reads RED. Pyrrolidone carboxylic acid is present on glutamine 298. Phenylalanine 301 is modified (phenylalanine amide). The propeptide occupies 303 to 305; the sequence is RED. Glutamine 306 carries the pyrrolidone carboxylic acid modification. Phenylalanine amide is present on phenylalanine 309. Residues 311-321 constitute a propeptide that is removed on maturation; sequence RELQGRFGRED. Position 322 is a pyrrolidone carboxylic acid (glutamine 322). Phenylalanine 325 carries the phenylalanine amide modification. Positions 327–329 are excised as a propeptide; that stretch reads RED. Glutamine 330 is modified (pyrrolidone carboxylic acid). Phenylalanine 333 carries the post-translational modification Phenylalanine amide. Positions 335 to 342 are excised as a propeptide; the sequence is REDLAKED. The residue at position 343 (glutamine 343) is a Pyrrolidone carboxylic acid. Residue phenylalanine 346 is modified to Phenylalanine amide. A propeptide spanning residues 348-355 is cleaved from the precursor; it reads REDLAKED. Glutamine 356 is subject to Pyrrolidone carboxylic acid. Phenylalanine 359 carries the post-translational modification Phenylalanine amide. A propeptide spanning residues 361–368 is cleaved from the precursor; that stretch reads REDIAKED. Glutamine 369 carries the post-translational modification Pyrrolidone carboxylic acid. Phenylalanine amide is present on phenylalanine 372. The propeptide occupies 374-429; the sequence is RNAAAAAKKRTIDVIDIESDPKPQTRFRDGKDMQEKRKVEKKDKIEKSDDALAKIS. Positions 392-429 are enriched in basic and acidic residues; that stretch reads SDPKPQTRFRDGKDMQEKRKVEKKDKIEKSDDALAKIS.

The protein belongs to the FARP (FMRFamide related peptide) family.

It localises to the secreted. Not known but it could act as a transmitter at neuromuscular synapses. In Anthopleura elegantissima (Green aggregating anemone), this protein is Antho-RFamide neuropeptides type 2.